Reading from the N-terminus, the 1419-residue chain is Multidrug resistance protein 1 (1419 aa).

The segment at 1-37 (MGKEQKEKKDGNLSIKEEVEKELNKKSTAELFRKIKN) is r domain; regulates transporter activity. Residues 1–60 (MGKEQKEKKDGNLSIKEEVEKELNKKSTAELFRKIKNEKISFFLPFKCLPAQHRKLLFIS) lie on the Cytoplasmic side of the membrane. Residues 58 to 345 (FISFVCAVLS…ILPNITEYMK (288 aa)) enclose the ABC transmembrane type-1 1 domain. The chain crosses the membrane as a helical span at residues 61–81 (FVCAVLSGGTLPFFISVFGVI). Residues 82-90 (LKNMNLGDD) lie on the Vacuolar side of the membrane. A helical transmembrane segment spans residues 91–111 (INPIILSLVSIGLVQFILSMI). At 112 to 168 (SSYCMDVITSKILKTLKLEYLRSVFYQDGQFHDNNPGSKLRSDLDFYLEQVSSGIGT) the chain is on the cytoplasmic side. Residues 169–189 (KFITIFTYASSFLGLYIWSLI) form a helical membrane-spanning segment. Residues 190–191 (KN) are Vacuolar-facing. Residues 192-212 (ARLTLCITCVFPLIYVCGVIC) form a helical membrane-spanning segment. Residues 213–275 (NKKVKLNKKT…KYILKANFVE (63 aa)) are Cytoplasmic-facing. Residues 276–296 (ALHIGLINGLILVSYAFGFWY) traverse the membrane as a helical segment. Residues 297–316 (GTRIIINSATNQYPNNDFNG) are Vacuolar-facing. Residues 317–337 (ASVISILLGVLISMFMLTIIL) traverse the membrane as a helical segment. Over 338–788 (PNITEYMKAL…YKEIFSYKKD (451 aa)) the chain is Cytoplasmic. Residues 378–662 (IEFKNVRFHY…NNNNNNNNNK (285 aa)) form the ABC transporter 1 domain. ATP is bound by residues Y387, T389, R390, S415, C417, G418, K419, S420, T421, Q462, K562, S564, G566, and Q567. A Mg(2+)-binding site is contributed by Q462. Disordered stretches follow at residues 639–665 (ERSDNNNNNNNDDNNNNNNNNNNKINN) and 697–752 (SSNK…TAEN). Composition is skewed to low complexity over residues 643-665 (NNNNNNNDDNNNNNNNNNNKINN) and 697-715 (SSNKSSNNGNDNGSDNKSS). The segment covering 723 to 749 (GNDADNMNSLSIHENENISNNRNCKNT) has biased composition (polar residues). The helical transmembrane segment at 789–809 (VTIIFFSILVAGGLYPVFALL) threads the bilayer. One can recognise an ABC transmembrane type-1 2 domain in the interval 791-1083 (IIFFSILVAG…GSYAGKLMSL (293 aa)). Residues 810 to 829 (YARYVSTLFDFANLEYNSNK) lie on the Vacuolar side of the membrane. Residues 830–850 (YSIYILLIAIAMFISETLKNY) traverse the membrane as a helical segment. Residues 851–907 (YNNKIGEKVEKTMKRRLFENILYQEMSFFDQDKNTPGVLSAHINRDVHLLKTGLVNN) are Cytoplasmic-facing. A run of 2 helical transmembrane segments spans residues 908 to 928 (IVIFSHFIMLFLVSMVMSFYF) and 929 to 949 (CPIVAAVLTFIYFINMRVFAV). Residues 950-1032 (RARLTKSKEI…RIIVNAALWG (83 aa)) lie on the Cytoplasmic side of the membrane. A helical transmembrane segment spans residues 1033 to 1053 (FSQSAQLFINSFAYWFGSFLI). The Vacuolar portion of the chain corresponds to 1054–1057 (KRGT). A helical transmembrane segment spans residues 1058–1078 (ILVDDFMKSLFTFIFTGSYAG). At 1079–1419 (KLMSLKGDSE…IYKKYVKLAK (341 aa)) the chain is on the cytoplasmic side. The ABC transporter 2 domain maps to 1126-1416 (VDIKDVNFRY…QDGIYKKYVK (291 aa)). Residues Y1135, R1138, T1163, G1164, G1166, K1167, S1168, T1169, Q1256, L1312, S1313, G1315, and Q1316 each coordinate ATP. S1168 provides a ligand contact to Mg(2+). Q1256 contributes to the Mg(2+) binding site.

Belongs to the ABC transporter superfamily. ABCB family. Multidrug resistance exporter (TC 3.A.1.201) subfamily.

It is found in the vacuole membrane. The enzyme catalyses ATP + H2O + xenobioticSide 1 = ADP + phosphate + xenobioticSide 2.. In terms of biological role, energy-dependent efflux pump responsible for decreased drug accumulation in multidrug-resistant cells. Transports lumefantrine, mefloquine, chloroquine, quinine, quinidine, amodiaquine, piperaquine, dihydroartemisinin and quinacrine. The sequence is that of Multidrug resistance protein 1 from Plasmodium falciparum (isolate 3D7).